We begin with the raw amino-acid sequence, 636 residues long: Threonine--tRNA ligase (636 aa).

A TGS domain is found at 1–61; the sequence is MPVITLPDGS…TQDVSLSIIT (61 aa). Residues 242–533 are catalytic; sequence DHRKLGKKFD…LIEEYEGAFP (292 aa). 3 residues coordinate Zn(2+): Cys-333, His-384, and His-510.

This sequence belongs to the class-II aminoacyl-tRNA synthetase family. In terms of assembly, homodimer. Zn(2+) is required as a cofactor.

Its subcellular location is the cytoplasm. The catalysed reaction is tRNA(Thr) + L-threonine + ATP = L-threonyl-tRNA(Thr) + AMP + diphosphate + H(+). Its function is as follows. Catalyzes the attachment of threonine to tRNA(Thr) in a two-step reaction: L-threonine is first activated by ATP to form Thr-AMP and then transferred to the acceptor end of tRNA(Thr). Also edits incorrectly charged L-seryl-tRNA(Thr). This is Threonine--tRNA ligase from Saccharophagus degradans (strain 2-40 / ATCC 43961 / DSM 17024).